Reading from the N-terminus, the 362-residue chain is MIYDFRKKSKFGYTTGSCAAAGAYSALYYLKFGKKLSYVEIENLNGDKLIIPIEKIEKCGNKAKAVVIKDAGGDIDITNGIEIITEVELKKGKKDVIIKGGEGVGIVTKNGLQVKKGEPAINPKPREMIRNNLLKLLNDDEVVEVTISIPKGKELAKKTLNPKLGIVGGLSILGTTGIVRPMSNEAYMNSLAPQIDVALANGYKRLIFVPGNIGTKYAKQLLNANDDEIIEVSNFWGFMLDKAKEKGVEEILIFGHAGKIIKLAGGIYNTHSKVADCRNEILAAYSSLFIDDKEAIKKILYSNTTEEVIKILEEKGVLNDVFNFIAKRVVERLSERWKGIKFSCIIINMKGEVLGSYIWNKK.

It belongs to the CbiD family.

It catalyses the reaction Co-precorrin-5B + S-adenosyl-L-methionine = Co-precorrin-6A + S-adenosyl-L-homocysteine. It participates in cofactor biosynthesis; adenosylcobalamin biosynthesis; cob(II)yrinate a,c-diamide from sirohydrochlorin (anaerobic route): step 6/10. Its function is as follows. Catalyzes the methylation of C-1 in cobalt-precorrin-5B to form cobalt-precorrin-6A. In Methanocaldococcus jannaschii (strain ATCC 43067 / DSM 2661 / JAL-1 / JCM 10045 / NBRC 100440) (Methanococcus jannaschii), this protein is Cobalt-precorrin-5B C(1)-methyltransferase.